Here is a 406-residue protein sequence, read N- to C-terminus: 1-deoxy-D-xylulose 5-phosphate reductoisomerase (406 aa).

Residues Thr21, Gly22, Ser23, Ile24, Gly47, Gln50, and Asn127 each coordinate NADPH. 1-deoxy-D-xylulose 5-phosphate is bound at residue Lys128. Residue Glu129 participates in NADPH binding. Asp151 serves as a coordination point for Mn(2+). Positions 152, 153, 177, and 200 each coordinate 1-deoxy-D-xylulose 5-phosphate. Glu153 serves as a coordination point for Mn(2+). Gly206 contributes to the NADPH binding site. 1-deoxy-D-xylulose 5-phosphate-binding residues include Ser213, Asn218, Lys219, and Glu222. Glu222 is a Mn(2+) binding site.

The protein belongs to the DXR family. Mg(2+) serves as cofactor. It depends on Mn(2+) as a cofactor.

The enzyme catalyses 2-C-methyl-D-erythritol 4-phosphate + NADP(+) = 1-deoxy-D-xylulose 5-phosphate + NADPH + H(+). Its pathway is isoprenoid biosynthesis; isopentenyl diphosphate biosynthesis via DXP pathway; isopentenyl diphosphate from 1-deoxy-D-xylulose 5-phosphate: step 1/6. Functionally, catalyzes the NADPH-dependent rearrangement and reduction of 1-deoxy-D-xylulose-5-phosphate (DXP) to 2-C-methyl-D-erythritol 4-phosphate (MEP). The chain is 1-deoxy-D-xylulose 5-phosphate reductoisomerase from Mycobacterium leprae (strain Br4923).